An 89-amino-acid polypeptide reads, in one-letter code: Small ribosomal subunit protein uS15 (89 aa).

It belongs to the universal ribosomal protein uS15 family. In terms of assembly, part of the 30S ribosomal subunit. Forms a bridge to the 50S subunit in the 70S ribosome, contacting the 23S rRNA.

Its function is as follows. One of the primary rRNA binding proteins, it binds directly to 16S rRNA where it helps nucleate assembly of the platform of the 30S subunit by binding and bridging several RNA helices of the 16S rRNA. In terms of biological role, forms an intersubunit bridge (bridge B4) with the 23S rRNA of the 50S subunit in the ribosome. The protein is Small ribosomal subunit protein uS15 of Leuconostoc mesenteroides subsp. mesenteroides (strain ATCC 8293 / DSM 20343 / BCRC 11652 / CCM 1803 / JCM 6124 / NCDO 523 / NBRC 100496 / NCIMB 8023 / NCTC 12954 / NRRL B-1118 / 37Y).